A 344-amino-acid chain; its full sequence is Methylthioribose-1-phosphate isomerase (344 aa).

Substrate is bound by residues 46 to 48, Arg89, and Gln196; that span reads RGA. Residue Asp237 is the Proton donor of the active site. Position 247 to 248 (247 to 248) interacts with substrate; it reads NK.

It belongs to the eIF-2B alpha/beta/delta subunits family. MtnA subfamily.

The catalysed reaction is 5-(methylsulfanyl)-alpha-D-ribose 1-phosphate = 5-(methylsulfanyl)-D-ribulose 1-phosphate. It participates in amino-acid biosynthesis; L-methionine biosynthesis via salvage pathway; L-methionine from S-methyl-5-thio-alpha-D-ribose 1-phosphate: step 1/6. Its function is as follows. Catalyzes the interconversion of methylthioribose-1-phosphate (MTR-1-P) into methylthioribulose-1-phosphate (MTRu-1-P). The sequence is that of Methylthioribose-1-phosphate isomerase from Syntrophotalea carbinolica (strain DSM 2380 / NBRC 103641 / GraBd1) (Pelobacter carbinolicus).